The following is a 219-amino-acid chain: Cytidylate kinase (219 aa).

10–18 lines the ATP pocket; it reads GPAAAGKST.

This sequence belongs to the cytidylate kinase family. Type 1 subfamily.

The protein resides in the cytoplasm. The catalysed reaction is CMP + ATP = CDP + ADP. It catalyses the reaction dCMP + ATP = dCDP + ADP. The chain is Cytidylate kinase from Staphylococcus aureus (strain bovine RF122 / ET3-1).